Consider the following 168-residue polypeptide: MKKITTGVLILAIAIVVLIFQYINGDGPFKKSSTDVRGESYLVKRVIDGDTIIIDKDGQDERVRLIGVDTPETVKPNTPVQPYGKAASNFTKKHLTNQRVRLEYDREPKDKYGRTLAYVWLGDEMFNVKLAKEGLARAKFYPPNDKYRILIEQAQKEAQKKQLNIWER.

An N-terminal signal peptide occupies residues 1 to 27; sequence MKKITTGVLILAIAIVVLIFQYINGDG. Residues Arg64, Glu72, and Arg114 contribute to the active site.

Belongs to the thermonuclease family. It depends on Ca(2+) as a cofactor.

The protein resides in the secreted. The enzyme catalyses Endonucleolytic cleavage to nucleoside 3'-phosphates and 3'-phosphooligonucleotide end-products.. Its function is as follows. Enzyme that catalyzes the hydrolysis of both DNA and RNA at the 5'-position of the phosphodiester bond. The chain is Thermonuclease (nucI) from Staphylococcus intermedius.